The following is a 380-amino-acid chain: Cytochrome b (380 aa).

Helical transmembrane passes span 34–54 (FGSL…FLAM), 78–99 (WLLR…YFHI), 114–134 (WNIG…GYVL), and 179–199 (FFTF…INLL). The heme b site is built by His84 and His98. His183 contributes to the heme b binding site. His202 is an a ubiquinone binding site. The next 4 membrane-spanning stretches (helical) occupy residues 227-247 (YKDL…STFA), 289-309 (LGGV…PIIH), 321-341 (IAKT…WIGG), and 348-368 (FITI…LLIP).

It belongs to the cytochrome b family. The cytochrome bc1 complex contains 3 respiratory subunits (MT-CYB, CYC1 and UQCRFS1), 2 core proteins (UQCRC1 and UQCRC2) and probably 6 low-molecular weight proteins. The cofactor is heme b.

The protein resides in the mitochondrion inner membrane. In terms of biological role, component of the ubiquinol-cytochrome c reductase complex (complex III or cytochrome b-c1 complex) that is part of the mitochondrial respiratory chain. The b-c1 complex mediates electron transfer from ubiquinol to cytochrome c. Contributes to the generation of a proton gradient across the mitochondrial membrane that is then used for ATP synthesis. This chain is Cytochrome b (mt-cyb), found in Pelophylax plancyi (Korean pond frog).